Reading from the N-terminus, the 171-residue chain is ATP synthase subunit b (171 aa).

A helical membrane pass occupies residues 14-34; it reads LGDMLFIGISFIVLMALISVV. Residues 56–97 show a composition bias toward basic and acidic residues; it reads SAQKSRQEASDLADQRRDALSHSRAEASEIVADAKKSGEKQR. A disordered region spans residues 56-104; it reads SAQKSRQEASDLADQRRDALSHSRAEASEIVADAKKSGEKQRSSIVADA.

This sequence belongs to the ATPase B chain family. In terms of assembly, F-type ATPases have 2 components, F(1) - the catalytic core - and F(0) - the membrane proton channel. F(1) has five subunits: alpha(3), beta(3), gamma(1), delta(1), epsilon(1). F(0) has three main subunits: a(1), b(2) and c(10-14). The alpha and beta chains form an alternating ring which encloses part of the gamma chain. F(1) is attached to F(0) by a central stalk formed by the gamma and epsilon chains, while a peripheral stalk is formed by the delta and b chains.

It localises to the cell membrane. In terms of biological role, f(1)F(0) ATP synthase produces ATP from ADP in the presence of a proton or sodium gradient. F-type ATPases consist of two structural domains, F(1) containing the extramembraneous catalytic core and F(0) containing the membrane proton channel, linked together by a central stalk and a peripheral stalk. During catalysis, ATP synthesis in the catalytic domain of F(1) is coupled via a rotary mechanism of the central stalk subunits to proton translocation. Functionally, component of the F(0) channel, it forms part of the peripheral stalk, linking F(1) to F(0). In Lactiplantibacillus plantarum (strain ATCC BAA-793 / NCIMB 8826 / WCFS1) (Lactobacillus plantarum), this protein is ATP synthase subunit b.